The sequence spans 246 residues: Phycocyanobilin:ferredoxin oxidoreductase (246 aa).

This sequence belongs to the HY2 family.

It carries out the reaction (2R,3Z)-phycocyanobilin + 4 oxidized [2Fe-2S]-[ferredoxin] = biliverdin IXalpha + 4 reduced [2Fe-2S]-[ferredoxin] + 4 H(+). Its function is as follows. Catalyzes the four-electron reduction of biliverdin IX-alpha (2-electron reduction at both the A and D rings); the reaction proceeds via an isolatable 2-electron intermediate, 181,182-dihydrobiliverdin. The chain is Phycocyanobilin:ferredoxin oxidoreductase from Crocosphaera subtropica (strain ATCC 51142 / BH68) (Cyanothece sp. (strain ATCC 51142)).